Here is a 676-residue protein sequence, read N- to C-terminus: Double-stranded RNA-specific editase Adar (676 aa).

Positions 1–51 are disordered; the sequence is MKFDSRVMLNSANNNSPQHPVSAPSDINMNGYNRKLPQKRGYEMPKYSDPK. Residues 8 to 31 show a composition bias toward polar residues; the sequence is MLNSANNNSPQHPVSAPSDINMNG. Basic and acidic residues predominate over residues 40–51; sequence RGYEMPKYSDPK. 2 DRBM domains span residues 61 to 127 and 197 to 272; these read QPKN…SFIQ and ITVD…SLCN. Residues 348–672 enclose the A to I editase domain; it reads SVSTGTKCVS…LKKPIEQDEF (325 aa). Residue histidine 372 participates in Zn(2+) binding. Glutamate 374 acts as the Proton donor in catalysis. Cysteine 430 and cysteine 493 together coordinate Zn(2+).

In terms of tissue distribution, expressed in embryonic nervous system; late stage 13 sees ventral nerve cord expression which spreads to brain by stage 16. Expression is maintained through to adulthood.

Has A-to-I RNA editing activity on extended dsRNA: edits RNA-binding protein Rnp4F. A-to-I editing of pre-mRNAs acts predominantly through nervous system targets to affect adult nervous system integrity, function and behavior. Essential for adaptation to environmental stresses, such as oxygen deprivation, and for the prevention of premature neuronal degeneration, through the editing of ion channels as targets. This is Double-stranded RNA-specific editase Adar from Drosophila melanogaster (Fruit fly).